The following is a 372-amino-acid chain: uncharacterized protein (372 aa).

An FAD-binding site is contributed by 4-18 (YIIVGAGILGASTAY).

It belongs to the DadA oxidoreductase family. The cofactor is FAD.

This is an uncharacterized protein from Bacillus subtilis (strain 168).